The sequence spans 410 residues: MAFINENYLKLPGSYLFSEIARRVDNFRKENPNAKIIRLGIGDVTKPLAPAVIDALHKAVDEMAKEETFKGYGPEQGYSFLVSKIIEYDYMPRGIRLDEDEVFVSDGAKSDTGNFQEIFGLDNKVAVTDPVYPVYVDSNVMAGRTGKYLANGYFENITYLPCTAENNFIPELPKEKVDIIYLCFPNNPTGMTLSREELKKWVDYARENRAIILFDSAYEAYIREKDVPHSIYEVEGADEVAIEFRSFSKTAGFTGTRCAYTVVPKKVVAYTKNGEAHQLNSLWNRRQTTKFNGVPYIIQRAAAAVYTPEGQKQTKETIDYYMENAKIIKQGLEDIGLTVFGGVNAPYIWLKTPDGISSWEFFDIMLKEINVVGTPGSGFGPSGEGYFRLTAFGSRENTLEAVERFKNLKF.

Substrate contacts are provided by Tyr15 and Gly42. Pyridoxal 5'-phosphate-binding positions include Tyr72, Ala108 to Lys109, Tyr132, Asn187, Tyr218, and Ser246 to Ser248. Lys109, Tyr132, and Asn187 together coordinate substrate. Lys249 carries the post-translational modification N6-(pyridoxal phosphate)lysine. Residues Arg257 and Asn292 each coordinate pyridoxal 5'-phosphate. 2 residues coordinate substrate: Asn292 and Arg388.

The protein belongs to the class-I pyridoxal-phosphate-dependent aminotransferase family. LL-diaminopimelate aminotransferase subfamily. As to quaternary structure, homodimer. Pyridoxal 5'-phosphate is required as a cofactor.

The enzyme catalyses (2S,6S)-2,6-diaminopimelate + 2-oxoglutarate = (S)-2,3,4,5-tetrahydrodipicolinate + L-glutamate + H2O + H(+). Its pathway is amino-acid biosynthesis; L-lysine biosynthesis via DAP pathway; LL-2,6-diaminopimelate from (S)-tetrahydrodipicolinate (aminotransferase route): step 1/1. Involved in the synthesis of meso-diaminopimelate (m-DAP or DL-DAP), required for both lysine and peptidoglycan biosynthesis. Catalyzes the direct conversion of tetrahydrodipicolinate to LL-diaminopimelate. Can also use m-DAP instead of LL-DAP as the amino-group donor. The chain is LL-diaminopimelate aminotransferase from Acetivibrio thermocellus (strain ATCC 27405 / DSM 1237 / JCM 9322 / NBRC 103400 / NCIMB 10682 / NRRL B-4536 / VPI 7372) (Clostridium thermocellum).